The sequence spans 131 residues: Nitrogenase-stabilizing/protective protein NifW (131 aa).

This sequence belongs to the NifW family. In terms of assembly, homotrimer; associates with NifD.

Its function is as follows. May protect the nitrogenase Fe-Mo protein from oxidative damage. This chain is Nitrogenase-stabilizing/protective protein NifW, found in Frankia alni (strain DSM 45986 / CECT 9034 / ACN14a).